The sequence spans 67 residues: Probable tautomerase K2 (67 aa).

Pro-2 serves as the catalytic Proton acceptor; via imino nitrogen.

This sequence belongs to the 4-oxalocrotonate tautomerase family.

The protein is Probable tautomerase K2 of Dickeya dadantii (strain 3937) (Erwinia chrysanthemi (strain 3937)).